Reading from the N-terminus, the 174-residue chain is Ribosome maturation factor RimM (174 aa).

Positions 98 to 171 constitute a PRC barrel domain; it reads EGEFYFHQII…TIHIEVMEGL (74 aa).

Belongs to the RimM family. As to quaternary structure, binds ribosomal protein uS19.

The protein localises to the cytoplasm. Its function is as follows. An accessory protein needed during the final step in the assembly of 30S ribosomal subunit, possibly for assembly of the head region. Essential for efficient processing of 16S rRNA. May be needed both before and after RbfA during the maturation of 16S rRNA. It has affinity for free ribosomal 30S subunits but not for 70S ribosomes. The sequence is that of Ribosome maturation factor RimM from Bacillus pumilus (strain SAFR-032).